A 484-amino-acid chain; its full sequence is Carbohydrate sulfotransferase 7 (484 aa).

Topologically, residues 1–12 (MKGRRRRRREYC) are cytoplasmic. A helical; Signal-anchor for type II membrane protein transmembrane segment spans residues 13 to 33 (KFTLLLALYTLLLLLVPSVLD). Residues 34–484 (SHSEQDKGRN…PLETKANWAV (451 aa)) lie on the Lumenal side of the membrane. The disordered stretch occupies residues 71-90 (RSLAEGNPDRSPGSPGNLSA). A glycan (N-linked (GlcNAc...) asparagine) is linked at N87. 108 to 114 (WRTGSSF) is a 3'-phosphoadenylyl sulfate binding site. A glycan (N-linked (GlcNAc...) asparagine) is linked at N184. A 3'-phosphoadenylyl sulfate-binding site is contributed by 276-284 (RDPRAVHNS). N405 carries an N-linked (GlcNAc...) asparagine glycan. Position 460 is a phosphoserine (S460). A compositionally biased stretch (basic and acidic residues) spans 460-473 (SGDERDRKTVREGE). Residues 460–484 (SGDERDRKTVREGETPLETKANWAV) form a disordered region.

The protein belongs to the sulfotransferase 1 family. Gal/GlcNAc/GalNAc subfamily. Widely expressed. Highly expressed in kidney. Expressed at lower level in heart, lung and liver.

The protein resides in the golgi apparatus membrane. The catalysed reaction is chondroitin beta-D-glucuronate + n 3'-phosphoadenylyl sulfate = chondroitin 6'-sulfate + n adenosine 3',5'-bisphosphate + n H(+). Functionally, sulfotransferase that utilizes 3'-phospho-5'-adenylyl sulfate (PAPS) as sulfonate donor to catalyze the transfer of sulfate to position 6 of non-reducing N-acetylglucosamine (GlcNAc) residues. Preferentially acts on mannose-linked GlcNAc. Also able to catalyze the transfer of sulfate to position 6 of the N-acetylgalactosamine (GalNAc) residue of chondroitin. Also acts on core 2 mucin-type oligosaccharide and N-acetyllactosamine oligomer with a lower efficiency. Has weak or no activity toward keratan sulfate and oligosaccharides containing the Galbeta1-4GlcNAc. Catalyzes 6-O-sulfation of beta-benzyl GlcNAc but not alpha- or beta-benzyl GalNAc. This Mus musculus (Mouse) protein is Carbohydrate sulfotransferase 7 (Chst7).